We begin with the raw amino-acid sequence, 376 residues long: SKMDGQVIHCKAAVAWEAKKPLSLEEIEVAPPKAHEVRMKVLATAVCHTDAYTLSGVDPEGSFPVVLGHEGAGIVESVGEGVTKFKPGDSVIPLYIPQCGECKFCLNPKTNLCQKIRVTQGKGMMPDGTSRLTCRGKSLYHFMGASTFSEYAVVADISLCRVAPEAPPDRVCLLGCGVSTGYGAPLNTAKVEPGSTCAIFGLGAVGLAAIMGCRVAGASRIIAIDRNPDKFEKARIFGATDCVVPDASDKPISQVLGEMTDGGLDYTFECVGNVGIMRAALESCHKGWGVSVILGVAGGGQEISTRPFQLVTGRTWKGAAFGGWKSVESVPKLVDDYMAGKIMVDEFVSHSLPFDSINEAFDLMHAGKSIRTVLQL.

Position 1 is an N-acetylserine (Ser1). Zn(2+) contacts are provided by Cys47, His69, Cys99, Cys102, Cys105, Cys113, and Cys176.

Belongs to the zinc-containing alcohol dehydrogenase family. Class-III subfamily. In terms of assembly, homodimer. Zn(2+) is required as a cofactor. As to expression, liver and gut.

It is found in the cytoplasm. The enzyme catalyses a primary alcohol + NAD(+) = an aldehyde + NADH + H(+). It carries out the reaction a secondary alcohol + NAD(+) = a ketone + NADH + H(+). It catalyses the reaction S-(hydroxymethyl)glutathione + NADP(+) = S-formylglutathione + NADPH + H(+). The catalysed reaction is S-(hydroxymethyl)glutathione + NAD(+) = S-formylglutathione + NADH + H(+). The enzyme catalyses S-nitrosoglutathione + NADH + H(+) = S-(hydroxysulfenamide)glutathione + NAD(+). Its function is as follows. Class-III ADH is remarkably ineffective in oxidizing ethanol, but it readily catalyzes the oxidation of long-chain primary alcohols and the oxidation of S-(hydroxymethyl) glutathione. Also acts as a S-nitroso-glutathione reductase by catalyzing the NADH-dependent reduction of S-nitrosoglutathione, thereby regulating protein S-nitrosylation. The sequence is that of Alcohol dehydrogenase class-3 from Myxine glutinosa (Atlantic hagfish).